The chain runs to 329 residues: Eukaryotic translation initiation factor 2 subunit 1 (329 aa).

An S1 motif domain is found at 24–95 (DDLIMVKVNR…QKGYIDLSKR (72 aa)). Serine 59 is subject to Phosphoserine; by eIK1, eIK2 and PK4. The segment at 291-329 (LDKHDGISSDDDDYNTSDEDDENSSEEDENTSEDEEEED) is disordered. A compositionally biased stretch (acidic residues) spans 298–329 (SSDDDDYNTSDEDDENSSEEDENTSEDEEEED).

It belongs to the eIF-2-alpha family. Phosphorylated at Ser-59 by eIK1 in response to amino acid starvation. Phosphorylates at Ser-59 in schizonts and gametocytes but not in rings and young trophozoites. Phosphorylates at Ser-59 by eIK2 in salivary gland sporozoites but not in midgut and hemocoel sporozoites. Dephosphorylated at Ser-59 by UIS2. Phosphorylation of eIF2alpha subunit of the pre-initiation complex eIF2 inhibits recycling of inactive eIF2-GDP to active eIF2-GTP by limiting the activity of the guanine nucleotide exchange factor eIF2B and thus, inhibits protein translation.

Its subcellular location is the cytoplasm. The protein resides in the stress granule. Functionally, functions in the early steps of protein synthesis by forming a ternary complex with GTP and initiator tRNA. May regulate protein translation in response to amino acid starvation. May regulate protein at various stages of parasite development. The sequence is that of Eukaryotic translation initiation factor 2 subunit 1 from Plasmodium falciparum (isolate 3D7).